A 281-amino-acid chain; its full sequence is Endochitinase B (281 aa).

The N-terminal stretch at 1–33 (MAMAKAGAPRVSAAQLVTLGLSLLCAVAGPAAA) is a signal peptide. In terms of domain architecture, Chitin-binding type-1 spans 34–68 (QNCGCQPNVCCSKFGYCGTTDEYCGDGCQSGPCRS). Cystine bridges form between Cys-36/Cys-44, Cys-38/Cys-50, Cys-43/Cys-57, and Cys-61/Cys-66. Residues 69-78 (GGGGSSGGGG) form a hinge region (Gly-rich) region. The catalytic stretch occupies residues 79-281 (ANVASVVTGS…GVDPGPNLTC (203 aa)). The cysteines at positions 101 and 150 are disulfide-linked. Residue Glu-145 is the Proton donor of the active site. The N-linked (GlcNAc...) asparagine glycan is linked to Asn-156. Disulfide bonds link Cys-162–Cys-171 and Cys-249–Cys-281. Asn-278 carries N-linked (GlcNAc...) asparagine glycosylation.

This sequence belongs to the glycosyl hydrolase 19 family. Chitinase class I subfamily.

It is found in the secreted. It carries out the reaction Random endo-hydrolysis of N-acetyl-beta-D-glucosaminide (1-&gt;4)-beta-linkages in chitin and chitodextrins.. Functionally, defense against chitin-containing fungal pathogens. Its action is countered by fungal polyglycine hydrolases, that cleaves within its hinge region (Gly-rich) to disrupt chitin-binding. This is Endochitinase B from Zea mays (Maize).